Reading from the N-terminus, the 124-residue chain is uncharacterized protein (124 aa).

A helical membrane pass occupies residues 70–90; the sequence is LLYLALVLLLVVILSTAFFSI.

The protein resides in the membrane. This is an uncharacterized protein from Saccharomyces cerevisiae (strain ATCC 204508 / S288c) (Baker's yeast).